The following is a 305-amino-acid chain: Glycine--tRNA ligase alpha subunit (305 aa).

The protein belongs to the class-II aminoacyl-tRNA synthetase family. As to quaternary structure, tetramer of two alpha and two beta subunits.

It localises to the cytoplasm. It carries out the reaction tRNA(Gly) + glycine + ATP = glycyl-tRNA(Gly) + AMP + diphosphate. This Streptococcus pyogenes serotype M12 (strain MGAS2096) protein is Glycine--tRNA ligase alpha subunit.